A 465-amino-acid polypeptide reads, in one-letter code: Protein hedgehog (465 aa).

A lipid anchor (N-palmitoyl cysteine) is attached at C79. Residues E143, E144, D149, T179, E180, D183, and D185 each coordinate Ca(2+). G251 carries the Cholesterol glycine ester lipid modification.

This sequence belongs to the hedgehog family. As to quaternary structure, interacts with shf. In terms of processing, the C-terminal part of the hedgehog protein precursor displays an autoproteolysis activity that results in the cleavage of the full-length protein into two parts (N-product and C-product). In addition, the C-terminal part displays a cholesterol transferase activity that results by the covalent attachment of a cholesterol moiety to the C-terminal of the newly generated N-product. The N-product is the active species in both local and long-range signaling, whereas the C-product has no signaling activity. Post-translationally, cholesterylation is required for N-product targeting to lipid rafts and multimerization. N-palmitoylation by Rasp of the hedgehog N-product, within the secretory pathway, is required for the embryonic and larval patterning activities of the hedgehog signal.

The protein localises to the nucleus. The protein resides in the cytoplasm. It is found in the cell membrane. The catalysed reaction is glycyl-L-cysteinyl-[protein] + cholesterol + H(+) = [protein]-C-terminal glycyl cholesterol ester + N-terminal L-cysteinyl-[protein]. In terms of biological role, the C-terminal part of the hedgehog protein precursor displays an autoproteolysis activity that results in the cleavage of the full-length protein into two parts (N-product and C-product). In addition, the C-terminal part displays a cholesterol transferase activity that results by the covalent attachment of a cholesterol moiety to the C-terminal of the newly generated N-product. Once cleaved, the C-product has no signaling activity and diffuses from the cell. Functionally, the dually lipidated hedgehog protein N-product is a morphogen which is essential for a variety of patterning events during development. Establishes the anterior-posterior axis of the embryonic segments and patterns the larval imaginal disks. Binds to the patched (ptc) receptor, which functions in association with smoothened (smo), to activate the transcription of target genes wingless (wg), decapentaplegic (dpp) and ptc. In the absence of hh, ptc represses the constitutive signaling activity of smo through fused (fu). Essential component of a signaling pathway which regulates the Duox-dependent gut immune response to bacterial uracil; required to activate Cad99C-dependent endosome formation, norpA-dependent Ca2+ mobilization and p38 MAPK, which are essential steps in the Duox-dependent production of reactive oxygen species (ROS) in response to intestinal bacterial infection. During photoreceptor differentiation, it up-regulates transcription of Ubr3, which in turn promotes the hh-signaling pathway by mediating the ubiquitination and degradation of cos. This chain is Protein hedgehog, found in Drosophila yakuba (Fruit fly).